A 595-amino-acid polypeptide reads, in one-letter code: UvrABC system protein C (595 aa).

The 78-residue stretch at Ser-14–Ile-91 folds into the GIY-YIG domain. Residues Asp-196 to Leu-231 enclose the UVR domain.

The protein belongs to the UvrC family. In terms of assembly, interacts with UvrB in an incision complex.

It localises to the cytoplasm. In terms of biological role, the UvrABC repair system catalyzes the recognition and processing of DNA lesions. UvrC both incises the 5' and 3' sides of the lesion. The N-terminal half is responsible for the 3' incision and the C-terminal half is responsible for the 5' incision. The protein is UvrABC system protein C of Streptococcus thermophilus (strain CNRZ 1066).